The following is a 209-amino-acid chain: MGAILGKKIGMTRLYNDKREAVPCTVIQAGPCYVTQVKSTEKDGYEAYQLGFGERDEKKVSKPLAGHYKKAGKNPGYILSEVSKSLIVGELEAGATVPVDVFKEGDKVNVLGVTKGKGFAGVVKRHNFGGGSRTHGQSDRLRAPGSVGGSSDPSRTFKGTRMAGRMGGKNKTVQNLVIVKVMPESNLIVVKGAVPGPKNSYVKIVSTTK.

The disordered stretch occupies residues 127-166 (NFGGGSRTHGQSDRLRAPGSVGGSSDPSRTFKGTRMAGRM).

The protein belongs to the universal ribosomal protein uL3 family. Part of the 50S ribosomal subunit. Forms a cluster with proteins L14 and L19.

In terms of biological role, one of the primary rRNA binding proteins, it binds directly near the 3'-end of the 23S rRNA, where it nucleates assembly of the 50S subunit. In Chlorobaculum tepidum (strain ATCC 49652 / DSM 12025 / NBRC 103806 / TLS) (Chlorobium tepidum), this protein is Large ribosomal subunit protein uL3.